The chain runs to 155 residues: Small ribosomal subunit protein uS7 (155 aa).

This sequence belongs to the universal ribosomal protein uS7 family. As to quaternary structure, part of the 30S ribosomal subunit. Contacts proteins S9 and S11.

Functionally, one of the primary rRNA binding proteins, it binds directly to 16S rRNA where it nucleates assembly of the head domain of the 30S subunit. Is located at the subunit interface close to the decoding center, probably blocks exit of the E-site tRNA. The protein is Small ribosomal subunit protein uS7 of Mycoplasma pneumoniae (strain ATCC 29342 / M129 / Subtype 1) (Mycoplasmoides pneumoniae).